The primary structure comprises 70 residues: Conotoxin Pl171 (70 aa).

An N-terminal signal peptide occupies residues 1–21; it reads MGMRMMFTMILLVVLVTTVVS. Cystine bridges form between Cys-54/Cys-61 and Cys-55/Cys-67. Residue Phe-69 is modified to Phenylalanine amide.

Belongs to the conotoxin A superfamily. Expressed by the venom duct.

The protein resides in the secreted. Functionally, probable neurotoxin with unknown target. Possibly targets ion channels. This is Conotoxin Pl171 from Conus planorbis (Planorbis cone).